The chain runs to 272 residues: MKIAFVIRKDCSRCARIAESIIDLLPKDWEIIYDHEAAKFLNSKGLDISQISADVIITIGGDGTVLRTLQMAKGPVLGINMGGLGFLTELEVDEVGSAIFKLIKGQYRITESMKLKVEINGDRVEDCTNEAVVHTERIARIRQFKIYIDGHFLSTMKSDGIIVATPIGSSSYSSSAGGPLLLPTLKGMVISYLAPYSSRLKPVVVTSDSTVEIKIAGRDQECILILDGQREYTVRSGDTVRISRSENSARFLSFRESVYDRIRDKVIKHVVN.

The active-site Proton acceptor is Asp62. Residues 62–63, Arg67, 129–130, Arg140, Lys157, Asp159, Ile167, 170–175, Ala194, and Gln229 each bind NAD(+); these read DG, NE, and SSYSSS.

Belongs to the NAD kinase family. It depends on a divalent metal cation as a cofactor.

The protein localises to the cytoplasm. It carries out the reaction NAD(+) + ATP = ADP + NADP(+) + H(+). Functionally, involved in the regulation of the intracellular balance of NAD and NADP, and is a key enzyme in the biosynthesis of NADP. Catalyzes specifically the phosphorylation on 2'-hydroxyl of the adenosine moiety of NAD to yield NADP. This chain is NAD kinase, found in Thermoplasma acidophilum (strain ATCC 25905 / DSM 1728 / JCM 9062 / NBRC 15155 / AMRC-C165).